The chain runs to 432 residues: Carbohydrate esterase MZ0003 (432 aa).

The signal sequence occupies residues 1–25; it reads MQRTCVLIVLIVTSTMWTPDPDVYA. A GXSYXG catalytic site motif motif is present at residues 266 to 271; sequence GHSRLG. Serine 268 functions as the Nucleophile in the catalytic mechanism. Residues lysine 272 and tryptophan 359 each contribute to the substrate site. Histidine 409 (charge relay system) is an active-site residue.

Belongs to the carbohydrate esterase 15 (CE15) family. Does not require metal ions for activity. serves as cofactor.

Its subcellular location is the periplasm. With respect to regulation, is inhibited by PMSF and by NaF in vitro, which is consistent with the catalytic nucleophile being a serine. Its function is as follows. Displays some glucuronoyl esterase activity in vitro, since it is able to hydrolyze methyl 4-O-methyl-D-glucopyranosyluronate, allyl D-glucuronate, benzyl D-glucuronate and D-glucuronic acid methyl ester. However, esters of glucuronic acid are probably not its biological substrate, as they are not present in the marine environment. Can also hydrolyze a range of other esters, including p-nitrophenyl acetate. More likely biologically-relevant substrates for MZ0003 and other marine bacterial CE15s are algal cell wall polysaccharides, as these would be readily available in this environment and could be used as energy sources. This Unknown prokaryotic organism protein is Carbohydrate esterase MZ0003.